The primary structure comprises 419 residues: Acyl-[acyl-carrier-protein] hydrolase FATB1, chloroplastic (419 aa).

The N-terminal 50 residues, 1-50, are a transit peptide targeting the chloroplast; it reads MVAAAATSAFFPVPAPGTSPKPGKSGNWPSSLSPTFKPKSIPNGGFQVKA. The segment at 1–84 is disordered; the sequence is MVAAAATSAF…DTSSSPPPRA (84 aa). The span at 61–78 shows a compositional bias: polar residues; it reads SAVNLKSGSLNTQEDTSS. Active-site residues include N315, H317, and C352. The interval 390–419 is disordered; the sequence is SRTEWRPKNAGTNGAISTSTAKTSNGNSVS. Positions 399-419 are enriched in polar residues; sequence AGTNGAISTSTAKTSNGNSVS.

The protein belongs to the acyl-ACP thioesterase family.

It is found in the plastid. Its subcellular location is the chloroplast. The enzyme catalyses octanoyl-[ACP] + H2O = octanoate + holo-[ACP] + H(+). It carries out the reaction decanoyl-[ACP] + H2O = decanoate + holo-[ACP] + H(+). Functionally, plays an essential role in chain termination during de novo fatty acid synthesis. Possesses thioesterase activity for short chain acyl-ACPs. Substrate preference is 8:0 &gt; 10:0. This chain is Acyl-[acyl-carrier-protein] hydrolase FATB1, chloroplastic, found in Cuphea viscosissima (Blue waxweed).